A 489-amino-acid chain; its full sequence is MSEVRVRFAPSPTGFLHIGGLRTALYNYLYAKRNNGKFLLRIEDTDRTRYVEGAIENLLEQLKWAGLDPDEGVVLDDEGNVTEVGECGPYIQSDRVKQGLYQKYIDELIEKGYAYYCFCSKERLDQVKAQQKADGLMPKYDGLCRGISIEDAKKRIANGEEYVIRLKLPENKEITFNDAIKGKITFNTNDMDDQVLIKSDGFPTYHFAVVVDDHLMGITHIVRGDEWISSTAKHVYLYQCFGWDVPEFVHLPVVLNKSGKKLSKRNDDVAVKDFRKKGYLPEAIDNYLALVGWSSEDNQEIMSMEELKHKFDFNRVSKSGGVFDTEKLNWINRHYIKEIENEKLASMLKPYLVEDGVISEDYPEYKLIEIASLFKEELDYMAEITEKVEFLFKDYEMDDDAKEFLNYEKLDELMNALKEEIESVDEIEKEFASGVMKKVQKKTGIKGKDLWMTTRAVVTGNVHGPDLDSIMVVLGKQEVLDRINKALNR.

The 'HIGH' region signature appears at 10–20; that stretch reads PSPTGFLHIGG. The 'KMSKS' region motif lies at 261–265; the sequence is KLSKR. Lys-264 serves as a coordination point for ATP.

Belongs to the class-I aminoacyl-tRNA synthetase family. Glutamate--tRNA ligase type 1 subfamily. Monomer.

The protein resides in the cytoplasm. The catalysed reaction is tRNA(Glu) + L-glutamate + ATP = L-glutamyl-tRNA(Glu) + AMP + diphosphate. Functionally, catalyzes the attachment of glutamate to tRNA(Glu) in a two-step reaction: glutamate is first activated by ATP to form Glu-AMP and then transferred to the acceptor end of tRNA(Glu). This chain is Glutamate--tRNA ligase, found in Finegoldia magna (strain ATCC 29328 / DSM 20472 / WAL 2508) (Peptostreptococcus magnus).